Here is a 300-residue protein sequence, read N- to C-terminus: Exonuclease (300 aa).

It catalyses the reaction Exonucleolytic cleavage in the 5'- to 3'-direction to yield nucleoside 5'-phosphates.. Plays an essential role in phage DNA replication by participating in the removal of DNA-linked RNA primers. Participates also in T7 DNA packaging, host DNA degradation and phage genetic recombination. The protein is Exonuclease of Escherichia phage T7 (Bacteriophage T7).